Consider the following 461-residue polypeptide: Putative dipeptidase CPSG_01350 (461 aa).

Residues 1–10 (MSARDNEKGS) are compositionally biased toward basic and acidic residues. The interval 1 to 31 (MSARDNEKGSARSQPSHAAASEIENVPRPSR) is disordered. Residues 35–52 (WTGTMIKVFIICACAGIV) form a helical membrane-spanning segment. Zn(2+)-binding residues include histidine 90, aspartate 92, and glutamate 203. An intrachain disulfide couples cysteine 142 to cysteine 232. Residue histidine 230 coordinates substrate. The Zn(2+) site is built by histidine 274 and histidine 295. Residues arginine 306 and aspartate 366 each contribute to the substrate site. Residue asparagine 379 is glycosylated (N-linked (GlcNAc...) asparagine).

This sequence belongs to the metallo-dependent hydrolases superfamily. Peptidase M19 family. Requires Zn(2+) as cofactor.

It is found in the membrane. It carries out the reaction an L-aminoacyl-L-amino acid + H2O = 2 an L-alpha-amino acid. Hydrolyzes a wide range of dipeptides. The protein is Putative dipeptidase CPSG_01350 of Coccidioides posadasii (strain RMSCC 757 / Silveira) (Valley fever fungus).